The chain runs to 186 residues: Imidazoleglycerol-phosphate dehydratase (186 aa).

The protein belongs to the imidazoleglycerol-phosphate dehydratase family.

Its subcellular location is the cytoplasm. It carries out the reaction D-erythro-1-(imidazol-4-yl)glycerol 3-phosphate = 3-(imidazol-4-yl)-2-oxopropyl phosphate + H2O. It functions in the pathway amino-acid biosynthesis; L-histidine biosynthesis; L-histidine from 5-phospho-alpha-D-ribose 1-diphosphate: step 6/9. The protein is Imidazoleglycerol-phosphate dehydratase of Pyrobaculum aerophilum (strain ATCC 51768 / DSM 7523 / JCM 9630 / CIP 104966 / NBRC 100827 / IM2).